The sequence spans 345 residues: Hydroxymethylglutaryl-CoA synthase (345 aa).

Residue Asp-28 participates in (3S)-3-hydroxy-3-methylglutaryl-CoA binding. The Proton donor/acceptor role is filled by Glu-80. 2 residues coordinate (3S)-3-hydroxy-3-methylglutaryl-CoA: Cys-112 and Thr-153. Catalysis depends on Cys-112, which acts as the Acyl-thioester intermediate. Position 199 (Arg-199) interacts with CoA. (3S)-3-hydroxy-3-methylglutaryl-CoA-binding residues include Thr-201 and His-234. His-234 functions as the Proton donor/acceptor in the catalytic mechanism. Lys-239 provides a ligand contact to CoA. (3S)-3-hydroxy-3-methylglutaryl-CoA contacts are provided by Arg-243, Asn-266, and Ser-296.

This sequence belongs to the thiolase-like superfamily. Archaeal HMG-CoA synthase family. Interacts with acetoacetyl-CoA thiolase that catalyzes the precedent step in the pathway and with a DUF35 protein. The acetoacetyl-CoA thiolase/HMG-CoA synthase complex channels the intermediate via a fused CoA-binding site, which allows for efficient coupling of the endergonic thiolase reaction with the exergonic HMGCS reaction.

The enzyme catalyses acetoacetyl-CoA + acetyl-CoA + H2O = (3S)-3-hydroxy-3-methylglutaryl-CoA + CoA + H(+). It participates in metabolic intermediate biosynthesis; (R)-mevalonate biosynthesis; (R)-mevalonate from acetyl-CoA: step 2/3. Its function is as follows. Catalyzes the condensation of acetyl-CoA with acetoacetyl-CoA to form 3-hydroxy-3-methylglutaryl-CoA (HMG-CoA). Functions in the mevalonate (MVA) pathway leading to isopentenyl diphosphate (IPP), a key precursor for the biosynthesis of isoprenoid compounds that are building blocks of archaeal membrane lipids. This chain is Hydroxymethylglutaryl-CoA synthase, found in Methanobrevibacter smithii (strain ATCC 35061 / DSM 861 / OCM 144 / PS).